We begin with the raw amino-acid sequence, 363 residues long: MIIDTTAVQDMNSFSRLQSLKEVSGIIWMLVPILSLVLGITLGVLVIVWLEREISAGIQQRIGPEYAGPMGILQALADGIKLIFKENLLPSRGDTRLFSIGPSIAVISILLSYSVIPFSSHLVLSDLNIGVFLWIAVSSIAPIGLLMSGYGSNNKYSFLGGLRAAAQSISYEIPLTLCLLSISLLSNSSSTVDIVEAQSKYGLWGWNLWRQPIGFLVFLISSLAECERLPFDLPEAEEELVAGYQTEYSGIKFGLFYVASYLNLLVSSLFVTVLYLGGWNISISYIFVPGLFEITKVGRVFGTTIGIFTTLAKTYLFLFISITTRWTLPRLRMDQLLNLGWKFLLPISLGNLLLTTSSQLLSL.

The next 9 helical transmembrane spans lie at 30–50 (LVPILSLVLGITLGVLVIVWL), 98–118 (FSIGPSIAVISILLSYSVIPF), 129–149 (IGVFLWIAVSSIAPIGLLMSG), 165–185 (AAQSISYEIPLTLCLLSISLL), 203–223 (LWGWNLWRQPIGFLVFLISSL), 248–268 (YSGIKFGLFYVASYLNLLVSS), 269–289 (LFVTVLYLGGWNISISYIFVP), 300–320 (VFGTTIGIFTTLAKTYLFLFI), and 334–354 (DQLLNLGWKFLLPISLGNLLL).

The protein belongs to the complex I subunit 1 family. NDH is composed of at least 16 different subunits, 5 of which are encoded in the nucleus.

It is found in the plastid. It localises to the chloroplast thylakoid membrane. It carries out the reaction a plastoquinone + NADH + (n+1) H(+)(in) = a plastoquinol + NAD(+) + n H(+)(out). It catalyses the reaction a plastoquinone + NADPH + (n+1) H(+)(in) = a plastoquinol + NADP(+) + n H(+)(out). In terms of biological role, NDH shuttles electrons from NAD(P)H:plastoquinone, via FMN and iron-sulfur (Fe-S) centers, to quinones in the photosynthetic chain and possibly in a chloroplast respiratory chain. The immediate electron acceptor for the enzyme in this species is believed to be plastoquinone. Couples the redox reaction to proton translocation, and thus conserves the redox energy in a proton gradient. This is NAD(P)H-quinone oxidoreductase subunit 1, chloroplastic from Oenothera elata subsp. hookeri (Hooker's evening primrose).